Reading from the N-terminus, the 339-residue chain is Anthranilate phosphoribosyltransferase (339 aa).

Residues G81, 84–85, T89, 91–94, 109–117, and A121 contribute to the 5-phospho-alpha-D-ribose 1-diphosphate site; these read GD, NIST, and KHGNRNLSS. G81 contacts anthranilate. Residue S93 coordinates Mg(2+). An anthranilate-binding site is contributed by N112. R167 provides a ligand contact to anthranilate. 2 residues coordinate Mg(2+): D226 and E227.

Belongs to the anthranilate phosphoribosyltransferase family. As to quaternary structure, homodimer. Mg(2+) is required as a cofactor.

The catalysed reaction is N-(5-phospho-beta-D-ribosyl)anthranilate + diphosphate = 5-phospho-alpha-D-ribose 1-diphosphate + anthranilate. It functions in the pathway amino-acid biosynthesis; L-tryptophan biosynthesis; L-tryptophan from chorismate: step 2/5. Functionally, catalyzes the transfer of the phosphoribosyl group of 5-phosphorylribose-1-pyrophosphate (PRPP) to anthranilate to yield N-(5'-phosphoribosyl)-anthranilate (PRA). This Roseobacter denitrificans (strain ATCC 33942 / OCh 114) (Erythrobacter sp. (strain OCh 114)) protein is Anthranilate phosphoribosyltransferase.